A 132-amino-acid polypeptide reads, in one-letter code: Small ribosomal subunit protein uS11 (132 aa).

It belongs to the universal ribosomal protein uS11 family. As to quaternary structure, part of the 30S ribosomal subunit. Interacts with proteins S7 and S18. Binds to IF-3.

Functionally, located on the platform of the 30S subunit, it bridges several disparate RNA helices of the 16S rRNA. Forms part of the Shine-Dalgarno cleft in the 70S ribosome. This is Small ribosomal subunit protein uS11 from Cupriavidus pinatubonensis (strain JMP 134 / LMG 1197) (Cupriavidus necator (strain JMP 134)).